A 90-amino-acid chain; its full sequence is Small ribosomal subunit protein bS18 (90 aa).

The protein belongs to the bacterial ribosomal protein bS18 family. As to quaternary structure, part of the 30S ribosomal subunit. Forms a tight heterodimer with protein bS6.

Binds as a heterodimer with protein bS6 to the central domain of the 16S rRNA, where it helps stabilize the platform of the 30S subunit. The sequence is that of Small ribosomal subunit protein bS18 from Polynucleobacter asymbioticus (strain DSM 18221 / CIP 109841 / QLW-P1DMWA-1) (Polynucleobacter necessarius subsp. asymbioticus).